The chain runs to 290 residues: Agglutinin-2 (290 aa).

Residues 1–35 (MAISNTNLLQTKKPISLPLLAFITLFLMLLNRVNS) form the signal peptide. The N-linked (GlcNAc...) asparagine glycan is linked to Asn155. Mn(2+) contacts are provided by Glu165 and Asp167. 3 residues coordinate Ca(2+): Asp167, Asn171, and Asp175. Residues Asp175 and His180 each contribute to the Mn(2+) site. Asn200 carries an N-linked (GlcNAc...) asparagine glycan.

The protein belongs to the leguminous lectin family. Homotetramer.

Its function is as follows. Mannose/glucose binding bark lectin. Bark lectins are storage proteins that probably maintain stocks of nitrogen during dormant period. Self-aggregatable molecules that can bind their own carbohydrate side chains. They could also play a role in the plant's defense against phytophagous invertebrates or herbivorous higher animals. The sequence is that of Agglutinin-2 from Cladrastis kentukea (Yellow wood).